Here is a 437-residue protein sequence, read N- to C-terminus: Phosphoribosylamine--glycine ligase (437 aa).

Residues 110 to 322 (KNLLRSADIP…LVEVMQAVVD (213 aa)) enclose the ATP-grasp domain. 142–203 (EPTDPVNVVV…EERLTGPEVS (62 aa)) provides a ligand contact to ATP. Residues Glu-292 and Asn-294 each contribute to the Mg(2+) site.

Belongs to the GARS family. Requires Mg(2+) as cofactor. The cofactor is Mn(2+).

The enzyme catalyses 5-phospho-beta-D-ribosylamine + glycine + ATP = N(1)-(5-phospho-beta-D-ribosyl)glycinamide + ADP + phosphate + H(+). It participates in purine metabolism; IMP biosynthesis via de novo pathway; N(1)-(5-phospho-D-ribosyl)glycinamide from 5-phospho-alpha-D-ribose 1-diphosphate: step 2/2. This is Phosphoribosylamine--glycine ligase from Rhodopirellula baltica (strain DSM 10527 / NCIMB 13988 / SH1).